The chain runs to 375 residues: Prophage integrase IntE (375 aa).

The Core-binding (CB) domain maps to 82–167 (ITTSTWLDRY…VLIDVFKEAQ (86 aa)). The region spanning 189–375 (ITRQRLSLEE…RGKGWSKVAL (187 aa)) is the Tyr recombinase domain. Active-site residues include arginine 226, lysine 249, histidine 330, arginine 333, and histidine 353. Residues 350 to 375 (LLGHKTQQQTDRYHDDRGKGWSKVAL) form a disordered region. Tyrosine 362 functions as the O-(3'-phospho-DNA)-tyrosine intermediate in the catalytic mechanism.

The protein belongs to the 'phage' integrase family.

Its function is as follows. Integrase from the cryptic lambdoid prophage e14. Integrase is necessary for integration of the phage into the host genome by site-specific recombination. In conjunction with excisionase, integrase is also necessary for excision of the prophage from the host genome. This Escherichia coli (strain K12) protein is Prophage integrase IntE (intE).